Consider the following 85-residue polypeptide: Large ribosomal subunit protein bL27 (85 aa).

Residues 1–21 (MAHKKGQGSTQNNRDSAGRRL) form a disordered region.

This sequence belongs to the bacterial ribosomal protein bL27 family.

The protein is Large ribosomal subunit protein bL27 of Wolinella succinogenes (strain ATCC 29543 / DSM 1740 / CCUG 13145 / JCM 31913 / LMG 7466 / NCTC 11488 / FDC 602W) (Vibrio succinogenes).